Here is a 253-residue protein sequence, read N- to C-terminus: Ubiquinone/menaquinone biosynthesis C-methyltransferase UbiE (253 aa).

S-adenosyl-L-methionine is bound by residues Thr-76, Asp-97, and 125 to 126 (NA).

The protein belongs to the class I-like SAM-binding methyltransferase superfamily. MenG/UbiE family.

The catalysed reaction is a 2-demethylmenaquinol + S-adenosyl-L-methionine = a menaquinol + S-adenosyl-L-homocysteine + H(+). It catalyses the reaction a 2-methoxy-6-(all-trans-polyprenyl)benzene-1,4-diol + S-adenosyl-L-methionine = a 5-methoxy-2-methyl-3-(all-trans-polyprenyl)benzene-1,4-diol + S-adenosyl-L-homocysteine + H(+). Its pathway is quinol/quinone metabolism; menaquinone biosynthesis; menaquinol from 1,4-dihydroxy-2-naphthoate: step 2/2. It functions in the pathway cofactor biosynthesis; ubiquinone biosynthesis. In terms of biological role, methyltransferase required for the conversion of demethylmenaquinol (DMKH2) to menaquinol (MKH2) and the conversion of 2-polyprenyl-6-methoxy-1,4-benzoquinol (DDMQH2) to 2-polyprenyl-3-methyl-6-methoxy-1,4-benzoquinol (DMQH2). This is Ubiquinone/menaquinone biosynthesis C-methyltransferase UbiE from Rhodopseudomonas palustris (strain ATCC BAA-98 / CGA009).